Consider the following 231-residue polypeptide: Ribonuclease HII (231 aa).

An RNase H type-2 domain is found at 32–223 (WPVAGMDEAG…FRLGGTEVVE (192 aa)). A divalent metal cation-binding residues include aspartate 38, glutamate 39, and aspartate 130.

The protein belongs to the RNase HII family. It depends on Mn(2+) as a cofactor. Requires Mg(2+) as cofactor.

It is found in the cytoplasm. The enzyme catalyses Endonucleolytic cleavage to 5'-phosphomonoester.. Its function is as follows. Endonuclease that specifically degrades the RNA of RNA-DNA hybrids. The chain is Ribonuclease HII from Mesorhizobium japonicum (strain LMG 29417 / CECT 9101 / MAFF 303099) (Mesorhizobium loti (strain MAFF 303099)).